We begin with the raw amino-acid sequence, 711 residues long: Polyribonucleotide nucleotidyltransferase (711 aa).

Mg(2+) is bound by residues aspartate 486 and aspartate 492. In terms of domain architecture, KH spans 553 to 612 (PRIHTIKISTDKIKDVIGKGGSVIRALTEETGTTIEIEDDGTVKIAATDGEKAKYAIRRI). In terms of domain architecture, S1 motif spans 622–690 (GRIYNSKVTR…RQGRVRLSIK (69 aa)). Residues 689 to 711 (IKEATEQSQPAAAPEAPASEQAE) are disordered. Residues 694 to 711 (EQSQPAAAPEAPASEQAE) are compositionally biased toward low complexity.

This sequence belongs to the polyribonucleotide nucleotidyltransferase family. In terms of assembly, component of the RNA degradosome, which is a multiprotein complex involved in RNA processing and mRNA degradation. Mg(2+) is required as a cofactor.

Its subcellular location is the cytoplasm. It catalyses the reaction RNA(n+1) + phosphate = RNA(n) + a ribonucleoside 5'-diphosphate. Involved in mRNA degradation. Catalyzes the phosphorolysis of single-stranded polyribonucleotides processively in the 3'- to 5'-direction. The chain is Polyribonucleotide nucleotidyltransferase from Salmonella typhi.